We begin with the raw amino-acid sequence, 325 residues long: Melanocortin receptor 5 (325 aa).

Residues 1–37 are Extracellular-facing; it reads MNSSSHLTLLDLTLNASEDNILGQNVNNKSSACEDMG. 3 N-linked (GlcNAc...) asparagine glycosylation sites follow: Asn2, Asn15, and Asn28. A helical transmembrane segment spans residues 38–61; it reads IAVEVFLTLGLVSLLENILVIGAI. At 62–73 the chain is on the cytoplasmic side; it reads VKNKNLHSPMYF. The chain crosses the membrane as a helical span at residues 74 to 97; it reads FVGSLAVADMLVSMSNAWETITIY. Topologically, residues 98–114 are extracellular; the sequence is LINNKHVVIADTFVRHI. A helical membrane pass occupies residues 115-138; the sequence is DNVFDSMICISVVASMCSLLAIAV. At 139–155 the chain is on the cytoplasmic side; the sequence is DRYITIFYALRYHHIMT. The chain crosses the membrane as a helical span at residues 156 to 179; it reads ARRSGVIIACIWTFCISCGIVFII. The Extracellular segment spans residues 180 to 186; the sequence is YYESKYV. The chain crosses the membrane as a helical span at residues 187–211; that stretch reads IVCLISMFFTMLFFMVSLYIHMFLL. Residues 212 to 239 lie on the Cytoplasmic side of the membrane; that stretch reads ARNHVKRIAASPRYNSVRQRASMKGAIT. The chain crosses the membrane as a helical span at residues 240 to 265; that stretch reads LTMLLGIFIVCWSPFFLHLILMISCP. Residues 266-273 lie on the Extracellular side of the membrane; it reads QNVYCACF. A helical transmembrane segment spans residues 274–297; sequence MSYFNMYLILIMCNSVIDPLIYAL. Over 298 to 325 the chain is Cytoplasmic; that stretch reads RSQEMRRTFKEIICCHGFRRTCTLLGRY. S-palmitoyl cysteine attachment occurs at residues Cys311 and Cys312.

The protein belongs to the G-protein coupled receptor 1 family. Very low expression levels is detected in brain, while high levels are found in adrenals, stomach, lung and spleen.

The protein resides in the cell membrane. In terms of biological role, receptor for MSH (alpha, beta and gamma) and ACTH. The activity of this receptor is mediated by G proteins which activate adenylate cyclase. This receptor is a possible mediator of the immunomodulation properties of melanocortins. The polypeptide is Melanocortin receptor 5 (Mc5r) (Rattus norvegicus (Rat)).